We begin with the raw amino-acid sequence, 304 residues long: Dihydroorotate dehydrogenase B (NAD(+)), catalytic subunit (304 aa).

FMN-binding positions include Ser-21 and 45–46 (KA). Substrate contacts are provided by residues Lys-45 and 69 to 73 (NAIGL). Residues Asn-99 and Asn-127 each coordinate FMN. Asn-127 is a binding site for substrate. Cys-130 (nucleophile) is an active-site residue. Lys-165 and Ile-191 together coordinate FMN. 192–193 (NT) lines the substrate pocket. FMN-binding positions include Gly-217, 243–244 (GG), and 265–266 (GT).

Belongs to the dihydroorotate dehydrogenase family. Type 1 subfamily. Heterotetramer of 2 PyrK and 2 PyrD type B subunits. FMN serves as cofactor.

It localises to the cytoplasm. It catalyses the reaction (S)-dihydroorotate + NAD(+) = orotate + NADH + H(+). It participates in pyrimidine metabolism; UMP biosynthesis via de novo pathway; orotate from (S)-dihydroorotate (NAD(+) route): step 1/1. Its function is as follows. Catalyzes the conversion of dihydroorotate to orotate with NAD(+) as electron acceptor. The protein is Dihydroorotate dehydrogenase B (NAD(+)), catalytic subunit (pyrD) of Listeria monocytogenes serotype 4b (strain F2365).